Here is a 577-residue protein sequence, read N- to C-terminus: Arginine--tRNA ligase (577 aa).

The 'HIGH' region motif lies at 122 to 132 (PNVAKEMHVGH).

Belongs to the class-I aminoacyl-tRNA synthetase family. Monomer.

The protein localises to the cytoplasm. The enzyme catalyses tRNA(Arg) + L-arginine + ATP = L-arginyl-tRNA(Arg) + AMP + diphosphate. This chain is Arginine--tRNA ligase, found in Vibrio vulnificus (strain CMCP6).